A 263-amino-acid polypeptide reads, in one-letter code: uncharacterized protein (263 aa).

31–38 (GPTGSGKT) contacts ATP.

The protein belongs to the CbbQ/NirQ/NorQ/GpvN family.

This is an uncharacterized protein from Staphylococcus aureus (strain USA300).